The following is a 101-amino-acid chain: Small ribosomal subunit protein uS14A (101 aa).

Disordered regions lie at residues 1-20 (MAKK…VARY) and 28-72 (TEII…RPRG). Composition is skewed to basic and acidic residues over residues 38-53 (EAER…RQPR) and 61-70 (RNRDSVDGRP).

Belongs to the universal ribosomal protein uS14 family. As to quaternary structure, part of the 30S ribosomal subunit. Contacts proteins S3 and S10.

Functionally, binds 16S rRNA, required for the assembly of 30S particles and may also be responsible for determining the conformation of the 16S rRNA at the A site. The sequence is that of Small ribosomal subunit protein uS14A from Streptomyces avermitilis (strain ATCC 31267 / DSM 46492 / JCM 5070 / NBRC 14893 / NCIMB 12804 / NRRL 8165 / MA-4680).